The following is a 155-amino-acid chain: Pre-hexon-linking protein VIII (155 aa).

A propeptide spanning residues 44–84 (GVHRTKDIKPEDLVGRGIQLNSYQPPTTRLKPERVFQLAGG) is cleaved from the precursor.

It belongs to the adenoviridae hexon-linking protein family. In terms of assembly, interacts with the peripentonal hexons as well as the hexons in the facets. Part of a complex composed of the core-capsid bridging protein, the endosome lysis protein VI and the hexon-linking protein VIII; these interactions bridge the virus core to the capsid. Cleaved by the viral protease during virion maturation. May cause the middle segment to be shed from the capsid.

Its subcellular location is the virion. It localises to the host nucleus. In terms of biological role, structural component of the virion that acts as a cement protein on the capsid interior and which glue the peripentonal hexons and group-of-nine hexons together. This chain is Pre-hexon-linking protein VIII, found in Bos taurus (Bovine).